The chain runs to 155 residues: Small ribosomal subunit protein bS16 (155 aa).

Positions 100–155 (EAGIPDPAPSTEEPAAVCEASAEMAGQPGEVEPAGAAAEPNSQEPEPEEEKPQVEA) are disordered. The segment covering 124–143 (AGQPGEVEPAGAAAEPNSQE) has biased composition (low complexity).

Belongs to the bacterial ribosomal protein bS16 family.

This is Small ribosomal subunit protein bS16 from Synechococcus sp. (strain JA-3-3Ab) (Cyanobacteria bacterium Yellowstone A-Prime).